The sequence spans 379 residues: Putative glutamate--cysteine ligase 2 (379 aa).

It belongs to the glutamate--cysteine ligase type 2 family. YbdK subfamily.

The catalysed reaction is L-cysteine + L-glutamate + ATP = gamma-L-glutamyl-L-cysteine + ADP + phosphate + H(+). Its function is as follows. ATP-dependent carboxylate-amine ligase which exhibits weak glutamate--cysteine ligase activity. This Mycobacterium avium (strain 104) protein is Putative glutamate--cysteine ligase 2.